The chain runs to 188 residues: uncharacterized protein (188 aa).

This is an uncharacterized protein from Haemophilus influenzae (strain ATCC 51907 / DSM 11121 / KW20 / Rd).